Consider the following 113-residue polypeptide: Large ribosomal subunit protein P1z (113 aa).

The interval 87 to 113 is disordered; sequence AAAPAKEEKKDEPAEESDGDLGFGLFD. At serine 103 the chain carries Phosphoserine.

The protein belongs to the eukaryotic ribosomal protein P1/P2 family. In terms of assembly, P1 and P2 exist as dimers at the large ribosomal subunit.

In terms of biological role, plays an important role in the elongation step of protein synthesis. The sequence is that of Large ribosomal subunit protein P1z (RPP1B) from Arabidopsis thaliana (Mouse-ear cress).